A 131-amino-acid chain; its full sequence is Two-component response regulator ORR3 (131 aa).

The Response regulatory domain occupies 12 to 129; sequence HVLAVDDSIV…DVSRLCNRVI (118 aa). Residue aspartate 62 is modified to 4-aspartylphosphate.

The protein belongs to the ARR family. Type-A subfamily. Post-translationally, two-component system major event consists of a His-to-Asp phosphorelay between a sensor histidine kinase (HK) and a response regulator (RR). In plants, the His-to-Asp phosphorelay involves an additional intermediate named Histidine-containing phosphotransfer protein (HPt). This multistep phosphorelay consists of a His-Asp-His-Asp sequential transfer of a phosphate group between first a His and an Asp of the HK protein, followed by the transfer to a conserved His of the HPt protein and finally the transfer to an Asp in the receiver domain of the RR protein. As to expression, expressed in roots, mature leaves and flowers, and at low levels in shoots.

In terms of biological role, functions as a response regulator involved in His-to-Asp phosphorelay signal transduction system. Phosphorylation of the Asp residue in the receiver domain activates the ability of the protein to promote the transcription of target genes. Type-A response regulators seem to act as negative regulators of the cytokinin signaling. In Oryza sativa subsp. indica (Rice), this protein is Two-component response regulator ORR3.